The following is a 510-amino-acid chain: 2,3-bisphosphoglycerate-independent phosphoglycerate mutase (510 aa).

A Mn(2+)-binding site is contributed by Asp-12. The residue at position 36 (Tyr-36) is a Phosphotyrosine. Ser-62 lines the Mn(2+) pocket. Residue Ser-62 is the Phosphoserine intermediate of the active site. Substrate is bound by residues His-123, Arg-153–Asp-154, Arg-185, Arg-191, Arg-261–Arg-264, and Lys-336. Positions 403, 407, 444, 445, and 462 each coordinate Mn(2+).

It belongs to the BPG-independent phosphoglycerate mutase family. As to quaternary structure, monomer. Mn(2+) serves as cofactor.

It catalyses the reaction (2R)-2-phosphoglycerate = (2R)-3-phosphoglycerate. The protein operates within carbohydrate degradation; glycolysis; pyruvate from D-glyceraldehyde 3-phosphate: step 3/5. In terms of biological role, essential for rapid growth and for sporulation. Catalyzes the interconversion of 2-phosphoglycerate and 3-phosphoglycerate. The polypeptide is 2,3-bisphosphoglycerate-independent phosphoglycerate mutase (Halalkalibacterium halodurans (strain ATCC BAA-125 / DSM 18197 / FERM 7344 / JCM 9153 / C-125) (Bacillus halodurans)).